The following is a 407-amino-acid chain: Lysophospholipid transporter LplT (407 aa).

Helical transmembrane passes span 18 to 38 (AVII…FATL), 53 to 73 (FLQM…GQIA), 91 to 111 (AGAL…LVGV), 139 to 159 (LMEA…GVLA), 163 to 183 (IYGA…ANML), 229 to 249 (WGAG…ALGI), 257 to 277 (LLNA…AKLV), 286 to 306 (LPAG…HNLM), 310 to 330 (SLLI…NALL), 343 to 365 (AIAV…YSLV), and 375 to 395 (IGIG…VWLI).

Belongs to the major facilitator superfamily. LplT (TC 2.A.1.42) family.

It is found in the cell inner membrane. In terms of biological role, catalyzes the facilitated diffusion of 2-acyl-glycero-3-phosphoethanolamine (2-acyl-GPE) into the cell. This Pectobacterium carotovorum subsp. carotovorum (strain PC1) protein is Lysophospholipid transporter LplT.